Reading from the N-terminus, the 329-residue chain is GTP 3',8-cyclase (329 aa).

One can recognise a Radical SAM core domain in the interval 8-234; sequence AFARKFYYLR…QLRQRSDGPA (227 aa). Arginine 17 is a binding site for GTP. 2 residues coordinate [4Fe-4S] cluster: cysteine 24 and cysteine 28. Tyrosine 30 is a binding site for S-adenosyl-L-methionine. Residue cysteine 31 coordinates [4Fe-4S] cluster. Arginine 68 contacts GTP. Glycine 72 contacts S-adenosyl-L-methionine. Threonine 99 is a GTP binding site. S-adenosyl-L-methionine is bound at residue serine 123. Lysine 160 is a GTP binding site. Position 194 (methionine 194) interacts with S-adenosyl-L-methionine. [4Fe-4S] cluster-binding residues include cysteine 257 and cysteine 260. 262-264 contributes to the GTP binding site; sequence RLR. Residue cysteine 274 coordinates [4Fe-4S] cluster.

The protein belongs to the radical SAM superfamily. MoaA family. Monomer and homodimer. Requires [4Fe-4S] cluster as cofactor.

It carries out the reaction GTP + AH2 + S-adenosyl-L-methionine = (8S)-3',8-cyclo-7,8-dihydroguanosine 5'-triphosphate + 5'-deoxyadenosine + L-methionine + A + H(+). The protein operates within cofactor biosynthesis; molybdopterin biosynthesis. In terms of biological role, catalyzes the cyclization of GTP to (8S)-3',8-cyclo-7,8-dihydroguanosine 5'-triphosphate. The chain is GTP 3',8-cyclase from Shigella boydii serotype 18 (strain CDC 3083-94 / BS512).